We begin with the raw amino-acid sequence, 189 residues long: Hypoxanthine/guanine phosphoribosyltransferase (189 aa).

The protein belongs to the purine/pyrimidine phosphoribosyltransferase family. Archaeal HPRT subfamily. Homodimer.

The protein resides in the cytoplasm. It catalyses the reaction IMP + diphosphate = hypoxanthine + 5-phospho-alpha-D-ribose 1-diphosphate. The catalysed reaction is GMP + diphosphate = guanine + 5-phospho-alpha-D-ribose 1-diphosphate. It participates in purine metabolism; IMP biosynthesis via salvage pathway; IMP from hypoxanthine: step 1/1. Its function is as follows. Catalyzes a salvage reaction resulting in the formation of IMP that is energically less costly than de novo synthesis. This chain is Hypoxanthine/guanine phosphoribosyltransferase, found in Methanosarcina mazei (strain ATCC BAA-159 / DSM 3647 / Goe1 / Go1 / JCM 11833 / OCM 88) (Methanosarcina frisia).